Reading from the N-terminus, the 51-residue chain is Large ribosomal subunit protein bL33 (51 aa).

The interval 1-21 (MRDKIKLESGAGTGHFYTTTK) is disordered.

This sequence belongs to the bacterial ribosomal protein bL33 family.

This is Large ribosomal subunit protein bL33 from Neisseria gonorrhoeae (strain ATCC 700825 / FA 1090).